A 177-amino-acid polypeptide reads, in one-letter code: Large ribosomal subunit protein uL6 (177 aa).

It belongs to the universal ribosomal protein uL6 family. Part of the 50S ribosomal subunit.

Functionally, this protein binds to the 23S rRNA, and is important in its secondary structure. It is located near the subunit interface in the base of the L7/L12 stalk, and near the tRNA binding site of the peptidyltransferase center. This Aeromonas hydrophila subsp. hydrophila (strain ATCC 7966 / DSM 30187 / BCRC 13018 / CCUG 14551 / JCM 1027 / KCTC 2358 / NCIMB 9240 / NCTC 8049) protein is Large ribosomal subunit protein uL6.